We begin with the raw amino-acid sequence, 184 residues long: Luciferin-binding protein (184 aa).

4 EF-hand domains span residues 10-45 (YHLR…IAKI), 46-81 (AKLS…EEAA), 98-133 (MAVI…VGPD), and 134-169 (ITDD…FLFG). The Ca(2+) site is built by D111, D113, D115, Y117, E122, D147, N149, N151, Q153, and E158.

In terms of biological role, this Ca(2+)-dependent protein binds to luciferin. The luciferin of LBP is capable of reacting with luciferase and O(2) only when calcium is bound. In Renilla reniformis (Sea pansy), this protein is Luciferin-binding protein.